Here is a 381-residue protein sequence, read N- to C-terminus: Protein COS1 (381 aa).

Over 1–42 the chain is Cytoplasmic; it reads MKENELKNEKSVDVLSFKQLESQKIVLPQDLFRSSFTWFCYE. Residues 43–63 form a helical membrane-spanning segment; that stretch reads IYKSLAFRIWMLLWLPLSVWW. Residues 64-72 are Extracellular-facing; it reads KLSNNCIYP. Residues 73-93 form a helical membrane-spanning segment; the sequence is LIVSLLVLFLGPIFVLVICGL. The Cytoplasmic portion of the chain corresponds to 94-231; the sequence is SRKRSLSKQL…YRFKLTWFLK (138 aa). Residues 232-252 traverse the membrane as a helical segment; sequence RISNIFMLIPFLNFLCCIYVS. The Extracellular segment spans residues 253-254; that stretch reads RG. Residues 255 to 275 form a helical membrane-spanning segment; it reads MCLLLRTFYLGWILFMLVQGF. The Cytoplasmic portion of the chain corresponds to 276–381; that stretch reads QNMRMIVLSV…QLSCSEESLA (106 aa).

This sequence belongs to the DUP/COS family.

The protein resides in the membrane. The protein is Protein COS1 (COS1) of Saccharomyces cerevisiae (strain ATCC 204508 / S288c) (Baker's yeast).